Reading from the N-terminus, the 240-residue chain is Large ribosomal subunit protein bL25 (240 aa).

The disordered stretch occupies residues 1–23 (MATVKELKATARPKAGKGAARAE). Positions 10–19 (TARPKAGKGA) are enriched in low complexity.

The protein belongs to the bacterial ribosomal protein bL25 family. CTC subfamily. In terms of assembly, part of the 50S ribosomal subunit; part of the 5S rRNA/L5/L18/L25 subcomplex. Contacts the 5S rRNA. Binds to the 5S rRNA independently of L5 and L18.

Functionally, this is one of the proteins that binds to the 5S RNA in the ribosome where it forms part of the central protuberance. The polypeptide is Large ribosomal subunit protein bL25 (Afipia carboxidovorans (strain ATCC 49405 / DSM 1227 / KCTC 32145 / OM5) (Oligotropha carboxidovorans)).